A 156-amino-acid polypeptide reads, in one-letter code: Small ribosomal subunit protein uS7 (156 aa).

This sequence belongs to the universal ribosomal protein uS7 family. As to quaternary structure, part of the 30S ribosomal subunit. Contacts proteins S9 and S11.

In terms of biological role, one of the primary rRNA binding proteins, it binds directly to 16S rRNA where it nucleates assembly of the head domain of the 30S subunit. Is located at the subunit interface close to the decoding center, probably blocks exit of the E-site tRNA. The chain is Small ribosomal subunit protein uS7 from Edwardsiella ictaluri (strain 93-146).